The chain runs to 234 residues: Large ribosomal subunit protein uL1 (234 aa).

The protein belongs to the universal ribosomal protein uL1 family. Part of the 50S ribosomal subunit.

In terms of biological role, binds directly to 23S rRNA. The L1 stalk is quite mobile in the ribosome, and is involved in E site tRNA release. Functionally, protein L1 is also a translational repressor protein, it controls the translation of the L11 operon by binding to its mRNA. In Tolumonas auensis (strain DSM 9187 / NBRC 110442 / TA 4), this protein is Large ribosomal subunit protein uL1.